Here is a 212-residue protein sequence, read N- to C-terminus: Imidazole glycerol phosphate synthase subunit HisH (212 aa).

The Glutamine amidotransferase type-1 domain maps to 1–212 (MLAILDYKAG…YAYCKEASRA (212 aa)). Catalysis depends on cysteine 79, which acts as the Nucleophile. Catalysis depends on residues histidine 187 and glutamate 189.

As to quaternary structure, heterodimer of HisH and HisF.

Its subcellular location is the cytoplasm. The enzyme catalyses 5-[(5-phospho-1-deoxy-D-ribulos-1-ylimino)methylamino]-1-(5-phospho-beta-D-ribosyl)imidazole-4-carboxamide + L-glutamine = D-erythro-1-(imidazol-4-yl)glycerol 3-phosphate + 5-amino-1-(5-phospho-beta-D-ribosyl)imidazole-4-carboxamide + L-glutamate + H(+). It carries out the reaction L-glutamine + H2O = L-glutamate + NH4(+). Its pathway is amino-acid biosynthesis; L-histidine biosynthesis; L-histidine from 5-phospho-alpha-D-ribose 1-diphosphate: step 5/9. IGPS catalyzes the conversion of PRFAR and glutamine to IGP, AICAR and glutamate. The HisH subunit catalyzes the hydrolysis of glutamine to glutamate and ammonia as part of the synthesis of IGP and AICAR. The resulting ammonia molecule is channeled to the active site of HisF. This chain is Imidazole glycerol phosphate synthase subunit HisH, found in Nitratidesulfovibrio vulgaris (strain DSM 19637 / Miyazaki F) (Desulfovibrio vulgaris).